The sequence spans 485 residues: Ribulose bisphosphate carboxylase large chain (485 aa).

A propeptide spanning residues 1-2 (MS) is cleaved from the precursor. P3 carries the N-acetylproline modification. N6,N6,N6-trimethyllysine is present on K14. Residues N123 and T173 each coordinate substrate. K175 acts as the Proton acceptor in catalysis. A substrate-binding site is contributed by K177. Mg(2+)-binding residues include K201, D203, and E204. The residue at position 201 (K201) is an N6-carboxylysine. H294 acts as the Proton acceptor in catalysis. Residues R295, H327, and S379 each contribute to the substrate site.

The protein belongs to the RuBisCO large chain family. Type I subfamily. As to quaternary structure, heterohexadecamer of 8 large chains and 8 small chains; disulfide-linked. The disulfide link is formed within the large subunit homodimers. Requires Mg(2+) as cofactor. In terms of processing, the disulfide bond which can form in the large chain dimeric partners within the hexadecamer appears to be associated with oxidative stress and protein turnover.

It localises to the plastid. It is found in the chloroplast. It catalyses the reaction 2 (2R)-3-phosphoglycerate + 2 H(+) = D-ribulose 1,5-bisphosphate + CO2 + H2O. The catalysed reaction is D-ribulose 1,5-bisphosphate + O2 = 2-phosphoglycolate + (2R)-3-phosphoglycerate + 2 H(+). In terms of biological role, ruBisCO catalyzes two reactions: the carboxylation of D-ribulose 1,5-bisphosphate, the primary event in carbon dioxide fixation, as well as the oxidative fragmentation of the pentose substrate in the photorespiration process. Both reactions occur simultaneously and in competition at the same active site. The protein is Ribulose bisphosphate carboxylase large chain of Helianthus annuus (Common sunflower).